The primary structure comprises 361 residues: Tetraacyldisaccharide 4'-kinase (361 aa).

Residue 49–56 participates in ATP binding; it reads TTGGTGKT.

This sequence belongs to the LpxK family.

It catalyses the reaction a lipid A disaccharide + ATP = a lipid IVA + ADP + H(+). It participates in glycolipid biosynthesis; lipid IV(A) biosynthesis; lipid IV(A) from (3R)-3-hydroxytetradecanoyl-[acyl-carrier-protein] and UDP-N-acetyl-alpha-D-glucosamine: step 6/6. Transfers the gamma-phosphate of ATP to the 4'-position of a tetraacyldisaccharide 1-phosphate intermediate (termed DS-1-P) to form tetraacyldisaccharide 1,4'-bis-phosphate (lipid IVA). The sequence is that of Tetraacyldisaccharide 4'-kinase from Chlorobaculum parvum (strain DSM 263 / NCIMB 8327) (Chlorobium vibrioforme subsp. thiosulfatophilum).